Here is a 757-residue protein sequence, read N- to C-terminus: Polyribonucleotide nucleotidyltransferase (757 aa).

Mg(2+) is bound by residues Asp488 and Asp494. Residues 555-614 (PKLYTMKINAEKIRDVIGKGGAVIRALTEETGCQINIEEDGTITIAATDAAKADIAKRRI) enclose the KH domain. One can recognise an S1 motif domain in the interval 624–692 (GKIYEGPVTK…ERGRVKLSMK (69 aa)). Positions 693–757 (VLAERPAPGS…ADTGSGQRVG (65 aa)) are disordered. Residues 720–736 (ALAEREPRREMRDHGHP) are compositionally biased toward basic and acidic residues. Low complexity predominate over residues 737–747 (PSEQQQQQSPP).

This sequence belongs to the polyribonucleotide nucleotidyltransferase family. The cofactor is Mg(2+).

The protein localises to the cytoplasm. It carries out the reaction RNA(n+1) + phosphate = RNA(n) + a ribonucleoside 5'-diphosphate. Its function is as follows. Involved in mRNA degradation. Catalyzes the phosphorolysis of single-stranded polyribonucleotides processively in the 3'- to 5'-direction. This chain is Polyribonucleotide nucleotidyltransferase, found in Verminephrobacter eiseniae (strain EF01-2).